We begin with the raw amino-acid sequence, 104 residues long: Thioredoxin (104 aa).

The 103-residue stretch at 2 to 104 (AIVKVTDADF…NLAEVLDKHL (103 aa)) folds into the Thioredoxin domain. C29 and C32 are disulfide-bonded.

This sequence belongs to the thioredoxin family.

In terms of biological role, component of the thioredoxin-thioredoxin reductase system. Participates in various redox reactions through the reversible oxidation of its active center dithiol to a disulfide and catalyzes dithiol-disulfide exchange reactions. This Staphylococcus aureus (strain N315) protein is Thioredoxin (trxA).